Reading from the N-terminus, the 151-residue chain is UPF0102 protein Ava_4800 (151 aa).

This sequence belongs to the UPF0102 family.

This chain is UPF0102 protein Ava_4800, found in Trichormus variabilis (strain ATCC 29413 / PCC 7937) (Anabaena variabilis).